Consider the following 273-residue polypeptide: Putative pyruvate, phosphate dikinase regulatory protein (273 aa).

149-156 (GPSRTSKT) is a binding site for ADP.

This sequence belongs to the pyruvate, phosphate/water dikinase regulatory protein family. PDRP subfamily.

It carries out the reaction N(tele)-phospho-L-histidyl/L-threonyl-[pyruvate, phosphate dikinase] + ADP = N(tele)-phospho-L-histidyl/O-phospho-L-threonyl-[pyruvate, phosphate dikinase] + AMP + H(+). The catalysed reaction is N(tele)-phospho-L-histidyl/O-phospho-L-threonyl-[pyruvate, phosphate dikinase] + phosphate + H(+) = N(tele)-phospho-L-histidyl/L-threonyl-[pyruvate, phosphate dikinase] + diphosphate. Functionally, bifunctional serine/threonine kinase and phosphorylase involved in the regulation of the pyruvate, phosphate dikinase (PPDK) by catalyzing its phosphorylation/dephosphorylation. The polypeptide is Putative pyruvate, phosphate dikinase regulatory protein (Rickettsia conorii (strain ATCC VR-613 / Malish 7)).